A 513-amino-acid chain; its full sequence is Galactose-1-phosphate uridylyltransferase (513 aa).

Belongs to the galactose-1-phosphate uridylyltransferase type 2 family.

It is found in the cytoplasm. It carries out the reaction alpha-D-galactose 1-phosphate + UDP-alpha-D-glucose = alpha-D-glucose 1-phosphate + UDP-alpha-D-galactose. The protein operates within carbohydrate metabolism; galactose metabolism. The polypeptide is Galactose-1-phosphate uridylyltransferase (galT) (Bacillus subtilis (strain 168)).